A 156-amino-acid polypeptide reads, in one-letter code: 6,7-dimethyl-8-ribityllumazine synthase (156 aa).

Residues F22, 57 to 59, and 81 to 83 each bind 5-amino-6-(D-ribitylamino)uracil; these read AVE and SVI. Residue 86-87 coordinates (2S)-2-hydroxy-3-oxobutyl phosphate; it reads GT. H89 acts as the Proton donor in catalysis. Residue F114 participates in 5-amino-6-(D-ribitylamino)uracil binding. Residue R128 coordinates (2S)-2-hydroxy-3-oxobutyl phosphate.

This sequence belongs to the DMRL synthase family. Forms an icosahedral capsid composed of 60 subunits, arranged as a dodecamer of pentamers.

It catalyses the reaction (2S)-2-hydroxy-3-oxobutyl phosphate + 5-amino-6-(D-ribitylamino)uracil = 6,7-dimethyl-8-(1-D-ribityl)lumazine + phosphate + 2 H2O + H(+). Its pathway is cofactor biosynthesis; riboflavin biosynthesis; riboflavin from 2-hydroxy-3-oxobutyl phosphate and 5-amino-6-(D-ribitylamino)uracil: step 1/2. In terms of biological role, catalyzes the formation of 6,7-dimethyl-8-ribityllumazine by condensation of 5-amino-6-(D-ribitylamino)uracil with 3,4-dihydroxy-2-butanone 4-phosphate. This is the penultimate step in the biosynthesis of riboflavin. This chain is 6,7-dimethyl-8-ribityllumazine synthase, found in Aliivibrio salmonicida (strain LFI1238) (Vibrio salmonicida (strain LFI1238)).